A 167-amino-acid polypeptide reads, in one-letter code: MANAKQLALFAMLVLLLASCAAARRHGKPDPCDGGGGGVDSHLPPGMRRCSSPAVSEDGTPAVMTVNGFEEGEDGGGPAACDGRYHSDRSLVAALSTGWFAGGRRCHRGIRITSRQNGRSVVATVVDECDSRHGGCKDDIVDTSAAVWSALGLDTNVGEVPVTWSDA.

The first 23 residues, 1–23, serve as a signal peptide directing secretion; that stretch reads MANAKQLALFAMLVLLLASCAAA. Residues 28–57 form a disordered region; it reads KPDPCDGGGGGVDSHLPPGMRRCSSPAVSE.

The protein belongs to the kiwellin family.

The protein resides in the secreted. This is Putative ripening-related protein 6 from Oryza sativa subsp. japonica (Rice).